A 230-amino-acid polypeptide reads, in one-letter code: Large ribosomal subunit protein uL1 (230 aa).

This sequence belongs to the universal ribosomal protein uL1 family. As to quaternary structure, part of the 50S ribosomal subunit.

Its function is as follows. Binds directly to 23S rRNA. The L1 stalk is quite mobile in the ribosome, and is involved in E site tRNA release. Functionally, protein L1 is also a translational repressor protein, it controls the translation of the L11 operon by binding to its mRNA. The sequence is that of Large ribosomal subunit protein uL1 from Erythrobacter litoralis (strain HTCC2594).